Here is a 120-residue protein sequence, read N- to C-terminus: NAD(P)H-quinone oxidoreductase subunit 3 (120 aa).

The next 3 helical transmembrane spans lie at 6–26, 64–84, and 89–109; these read GYDA…LALV, MFAL…PWAV, and LGLL…VALA.

It belongs to the complex I subunit 3 family. As to quaternary structure, NDH-1 can be composed of about 15 different subunits; different subcomplexes with different compositions have been identified which probably have different functions.

The protein localises to the cellular thylakoid membrane. It carries out the reaction a plastoquinone + NADH + (n+1) H(+)(in) = a plastoquinol + NAD(+) + n H(+)(out). The enzyme catalyses a plastoquinone + NADPH + (n+1) H(+)(in) = a plastoquinol + NADP(+) + n H(+)(out). Its function is as follows. NDH-1 shuttles electrons from an unknown electron donor, via FMN and iron-sulfur (Fe-S) centers, to quinones in the respiratory and/or the photosynthetic chain. The immediate electron acceptor for the enzyme in this species is believed to be plastoquinone. Couples the redox reaction to proton translocation, and thus conserves the redox energy in a proton gradient. Cyanobacterial NDH-1 also plays a role in inorganic carbon-concentration. This chain is NAD(P)H-quinone oxidoreductase subunit 3, found in Prochlorococcus marinus (strain MIT 9313).